The primary structure comprises 92 residues: Cell division topological specificity factor (92 aa).

It belongs to the MinE family.

Its function is as follows. Prevents the cell division inhibition by proteins MinC and MinD at internal division sites while permitting inhibition at polar sites. This ensures cell division at the proper site by restricting the formation of a division septum at the midpoint of the long axis of the cell. This is Cell division topological specificity factor from Gluconobacter oxydans (strain 621H) (Gluconobacter suboxydans).